The chain runs to 316 residues: Acetaldehyde dehydrogenase (316 aa).

Residue 11–14 (SGNI) coordinates NAD(+). Cysteine 131 acts as the Acyl-thioester intermediate in catalysis. NAD(+) is bound by residues 162-170 (SAGPGTRAN) and asparagine 289.

This sequence belongs to the acetaldehyde dehydrogenase family. As to quaternary structure, interacts with MhpE.

The enzyme catalyses acetaldehyde + NAD(+) + CoA = acetyl-CoA + NADH + H(+). Its pathway is aromatic compound metabolism; 3-phenylpropanoate degradation. Functionally, catalyzes the conversion of acetaldehyde to acetyl-CoA, using NAD(+) and coenzyme A. Is the final enzyme in the meta-cleavage pathway for the degradation of aromatic compounds. The protein is Acetaldehyde dehydrogenase of Escherichia coli O157:H7.